The primary structure comprises 396 residues: Phosphoglycerate kinase (396 aa).

Residues 22–24, arginine 37, 60–63, arginine 118, and arginine 151 contribute to the substrate site; these read DLN and HFGR. ATP contacts are provided by residues lysine 201, glutamate 323, and 353 to 356; that span reads GGDT.

This sequence belongs to the phosphoglycerate kinase family. Monomer.

It is found in the cytoplasm. The catalysed reaction is (2R)-3-phosphoglycerate + ATP = (2R)-3-phospho-glyceroyl phosphate + ADP. The protein operates within carbohydrate degradation; glycolysis; pyruvate from D-glyceraldehyde 3-phosphate: step 2/5. In Xanthobacter autotrophicus (strain ATCC BAA-1158 / Py2), this protein is Phosphoglycerate kinase.